A 190-amino-acid chain; its full sequence is Ribonuclease HII (190 aa).

Positions 3 to 190 constitute an RNase H type-2 domain; it reads KLIAGVDEVG…KPVKALLEEK (188 aa). A divalent metal cation is bound by residues Asp9, Glu10, and Asp101.

Belongs to the RNase HII family. Mn(2+) is required as a cofactor. Requires Mg(2+) as cofactor.

Its subcellular location is the cytoplasm. It catalyses the reaction Endonucleolytic cleavage to 5'-phosphomonoester.. Endonuclease that specifically degrades the RNA of RNA-DNA hybrids. This is Ribonuclease HII from Alteromonas mediterranea (strain DSM 17117 / CIP 110805 / LMG 28347 / Deep ecotype).